Reading from the N-terminus, the 335-residue chain is 5-formaminoimidazole-4-carboxamide-1-(beta)-D-ribofuranosyl 5'-monophosphate synthetase (335 aa).

5-amino-1-(5-phospho-beta-D-ribosyl)imidazole-4-carboxamide contacts are provided by H21 and S86. In terms of domain architecture, ATP-grasp spans 107–315; the sequence is RELLRWEADQ…YFDKPMDMGE (209 aa). ATP contacts are provided by residues 137–189 and E211; that span reads PTEV…VPAY. N231 lines the 5-amino-1-(5-phospho-beta-D-ribosyl)imidazole-4-carboxamide pocket. Mg(2+) is bound by residues E270 and E283.

Belongs to the phosphohexose mutase family. Mg(2+) serves as cofactor. Mn(2+) is required as a cofactor.

The catalysed reaction is 5-amino-1-(5-phospho-beta-D-ribosyl)imidazole-4-carboxamide + formate + ATP = 5-formamido-1-(5-phospho-D-ribosyl)imidazole-4-carboxamide + ADP + phosphate. It participates in purine metabolism; IMP biosynthesis via de novo pathway; 5-formamido-1-(5-phospho-D-ribosyl)imidazole-4-carboxamide from 5-amino-1-(5-phospho-D-ribosyl)imidazole-4-carboxamide (formate route): step 1/1. In terms of biological role, catalyzes the ATP- and formate-dependent formylation of 5-aminoimidazole-4-carboxamide-1-beta-d-ribofuranosyl 5'-monophosphate (AICAR) to 5-formaminoimidazole-4-carboxamide-1-beta-d-ribofuranosyl 5'-monophosphate (FAICAR) in the absence of folates. This chain is 5-formaminoimidazole-4-carboxamide-1-(beta)-D-ribofuranosyl 5'-monophosphate synthetase, found in Pyrobaculum arsenaticum (strain DSM 13514 / JCM 11321 / PZ6).